The chain runs to 427 residues: MTADPGDRVRVTHGDASHEGVLVPSPSDDHLVVKLDSGYNVGVDTADADIDVLDADAVTVDGDTGEDAAGSTVEFDDDLPTIALISTGGTIASTVDYRTGAVTAQFDAEDVLRAVPDLAGRANYRGRVVANILSENMEPSIWQDLAAAVREEIEAGADGVVVMHGTDTMQFSASALSFMLETPVPVVFTGSQRSADRPSSDNVMNAVCAVEAAKSDVAEVMVCMHATESDDRCALHRGTRVRKTHTSRRDAFETVGATPLGYVDYDAASEAATADARGVTVEGAHAARGDATLDVASALEPAVELVKFTPGMNESLLAACEGSAGVVIEGTGLGHVHSDLTDTIGSLVDDGTTVVMTSQCLEGRVCDRVYDTGRDLLAAGVVEAGDTLPGTAKVKLMWALANADDPEAAMQESVAGALTTQSRPWTA.

Residues 1-18 (MTADPGDRVRVTHGDASH) are compositionally biased toward basic and acidic residues. Residues 1–20 (MTADPGDRVRVTHGDASHEG) form a disordered region. Residues 80-413 (PTIALISTGG…DDPEAAMQES (334 aa)) enclose the Asparaginase/glutaminase domain. Active-site residues include Thr-90, Thr-166, Asp-167, and Lys-243.

Belongs to the asparaginase 1 family. GatD subfamily. In terms of assembly, heterodimer of GatD and GatE.

It catalyses the reaction L-glutamyl-tRNA(Gln) + L-glutamine + ATP + H2O = L-glutaminyl-tRNA(Gln) + L-glutamate + ADP + phosphate + H(+). Its function is as follows. Allows the formation of correctly charged Gln-tRNA(Gln) through the transamidation of misacylated Glu-tRNA(Gln) in organisms which lack glutaminyl-tRNA synthetase. The reaction takes place in the presence of glutamine and ATP through an activated gamma-phospho-Glu-tRNA(Gln). The GatDE system is specific for glutamate and does not act on aspartate. This is Glutamyl-tRNA(Gln) amidotransferase subunit D from Halobacterium salinarum (strain ATCC 29341 / DSM 671 / R1).